Reading from the N-terminus, the 113-residue chain is Iron-sulfur cluster insertion protein ErpA (113 aa).

Residues Cys-41, Cys-105, and Cys-107 each contribute to the iron-sulfur cluster site.

This sequence belongs to the HesB/IscA family. Homodimer. Iron-sulfur cluster is required as a cofactor.

Required for insertion of 4Fe-4S clusters for at least IspG. This is Iron-sulfur cluster insertion protein ErpA from Actinobacillus pleuropneumoniae serotype 3 (strain JL03).